A 417-amino-acid chain; its full sequence is Serine hydroxymethyltransferase (417 aa).

(6S)-5,6,7,8-tetrahydrofolate contacts are provided by residues L120 and 124–126 (GHL). K229 carries the post-translational modification N6-(pyridoxal phosphate)lysine.

The protein belongs to the SHMT family. Homodimer. It depends on pyridoxal 5'-phosphate as a cofactor.

It localises to the cytoplasm. It catalyses the reaction (6R)-5,10-methylene-5,6,7,8-tetrahydrofolate + glycine + H2O = (6S)-5,6,7,8-tetrahydrofolate + L-serine. The protein operates within one-carbon metabolism; tetrahydrofolate interconversion. It participates in amino-acid biosynthesis; glycine biosynthesis; glycine from L-serine: step 1/1. In terms of biological role, catalyzes the reversible interconversion of serine and glycine with tetrahydrofolate (THF) serving as the one-carbon carrier. This reaction serves as the major source of one-carbon groups required for the biosynthesis of purines, thymidylate, methionine, and other important biomolecules. Also exhibits THF-independent aldolase activity toward beta-hydroxyamino acids, producing glycine and aldehydes, via a retro-aldol mechanism. The sequence is that of Serine hydroxymethyltransferase from Anaeromyxobacter sp. (strain Fw109-5).